Here is a 195-residue protein sequence, read N- to C-terminus: Imidazoleglycerol-phosphate dehydratase (195 aa).

Belongs to the imidazoleglycerol-phosphate dehydratase family.

The protein resides in the cytoplasm. It catalyses the reaction D-erythro-1-(imidazol-4-yl)glycerol 3-phosphate = 3-(imidazol-4-yl)-2-oxopropyl phosphate + H2O. It participates in amino-acid biosynthesis; L-histidine biosynthesis; L-histidine from 5-phospho-alpha-D-ribose 1-diphosphate: step 6/9. The polypeptide is Imidazoleglycerol-phosphate dehydratase (Methanosphaerula palustris (strain ATCC BAA-1556 / DSM 19958 / E1-9c)).